The sequence spans 417 residues: Lissencephaly-1 homolog (417 aa).

The LisH domain occupies 7 to 39; the sequence is QKEELNGAILDYFDSSGYKLTSTEFTKETNIEL. A coiled-coil region spans residues 52 to 80; the sequence is TSVIRLQKKVMDLEAKVSQLEEELNNGGR. Positions 72 to 93 are disordered; it reads EEELNNGGRGPARRGKEDALPR. WD repeat units follow at residues 102-143, 144-185, 186-225, 228-267, 270-339, 342-383, and 385-417; these read GHRN…RTLK, GHTN…KTLH, GHDH…CTKT, GHED…CLLT, EHSH…CLQT, GHDN…KTIN, and AHSH…WKLG.

The protein belongs to the WD repeat LIS1/nudF family.

It is found in the cytoplasm. It localises to the cytoskeleton. The protein resides in the microtubule organizing center. Its subcellular location is the centrosome. Functionally, positively regulates the activity of the minus-end directed microtubule motor protein dynein. May enhance dynein-mediated microtubule sliding by targeting dynein to the microtubule plus end. Required for several dynein- and microtubule-dependent processes. The protein is Lissencephaly-1 homolog of Heterostelium pallidum (strain ATCC 26659 / Pp 5 / PN500) (Cellular slime mold).